The chain runs to 215 residues: Probable phosphoglycerate mutase GpmB (215 aa).

Residues 8 to 15, 21 to 22, Arg-58, Arg-60, 82 to 85, 104 to 105, and 151 to 152 contribute to the substrate site; these read RHGETQWN, QG, ELNM, RR, and GI. His-9 functions as the Tele-phosphohistidine intermediate in the catalytic mechanism. Glu-82 functions as the Proton donor/acceptor in the catalytic mechanism.

It belongs to the phosphoglycerate mutase family. GpmB subfamily.

The enzyme catalyses (2R)-2-phosphoglycerate = (2R)-3-phosphoglycerate. Its pathway is carbohydrate degradation; glycolysis; pyruvate from D-glyceraldehyde 3-phosphate: step 3/5. In Shigella dysenteriae serotype 1 (strain Sd197), this protein is Probable phosphoglycerate mutase GpmB.